Reading from the N-terminus, the 452-residue chain is Neuronal acetylcholine receptor subunit alpha-5 (452 aa).

The N-terminal stretch at 1–27 is a signal peptide; sequence MVQLLAGRWRPTGARRGTRGGLPELSS. Topologically, residues 28 to 239 are extracellular; sequence AAKHEDSLFR…VIKRLPLFYT (212 aa). Asparagine 140, asparagine 168, and asparagine 214 each carry an N-linked (GlcNAc...) asparagine glycan. A disulfide bridge connects residues cysteine 155 and cysteine 169. An intrachain disulfide couples cysteine 219 to cysteine 220. Helical transmembrane passes span 240 to 260, 269 to 289, and 302 to 322; these read LFLIIPCIGLSFLTVVVFYLP, LCTSVLVSLTVFLLVIEEIIP, and LVFTMIFVTLSIMVTVFAINI. Residues 323 to 414 are Cytoplasmic-facing; it reads HHRSSSTHNA…KFIAQVLDRM (92 aa). Residues 415-435 traverse the membrane as a helical segment; sequence FLWTFLLVSIIGTLGLFVPVI. Residues 436–452 lie on the Extracellular side of the membrane; the sequence is YKWANIIVPVHIGNTIK.

This sequence belongs to the ligand-gated ion channel (TC 1.A.9) family. Acetylcholine receptor (TC 1.A.9.1) subfamily. Alpha-5/CHRNA5 sub-subfamily. As to quaternary structure, neuronal AChR that forms heteropentamers composed of two different type of subunits: alpha and non-alpha (beta). CHRNA5/alpha-5 subunit is only able to form functional nAChRs when co-assembled with another alpha subunit, can be combined to CHRNA4/alpha-4 or CHRNA3/alpha-3 and CHRNB4/beta-4 or CHRNB2/beta-2 to give rise to functional receptors. Interacts with LYPD6.

The protein resides in the synaptic cell membrane. The protein localises to the cell membrane. It carries out the reaction Ca(2+)(in) = Ca(2+)(out). The catalysed reaction is K(+)(in) = K(+)(out). The enzyme catalyses Na(+)(in) = Na(+)(out). Its activity is regulated as follows. Activated by a myriad of ligands such as acetylcholine, cytisine, nicotine, choline and epibatidine. Component of neuronal acetylcholine receptors (nAChRs) that function as pentameric, ligand-gated cation channels with high calcium permeability among other activities. nAChRs are excitatory neurotrasnmitter receptors formed by a collection of nAChR subunits known to mediate synaptic transmission in the nervous system and the neuromuscular junction. Each nAchR subunit confers differential attributes to channel properties, including activation, deactivation and desensitization kinetics, pH sensitivity, cation permeability, and binding to allosteric modulators. Has an accessory rather than functional role and is only able to form functional nAChRs when co-assembled with another beta subunit. Participates in pentameric assemblies along with CHRNA3, CHRNA4, CHRNB2 and CHRNB4. Increases receptor sensitivity to acetylcholine and nicotine when associated with CHRNA4 and CHRNB2. Plays a role in nicotine addiction. The sequence is that of Neuronal acetylcholine receptor subunit alpha-5 (Chrna5) from Rattus norvegicus (Rat).